Consider the following 315-residue polypeptide: uncharacterized protein (315 aa).

A compositionally biased stretch (polar residues) spans 1 to 23 (MSNTDALNTANTQITENVDTSSM). Residues 1–31 (MSNTDALNTANTQITENVDTSSMKVEKTHDS) are disordered.

This is an uncharacterized protein from Acanthamoeba polyphaga mimivirus (APMV).